Reading from the N-terminus, the 132-residue chain is MSKRKKYVRPMTATWWQKLDFYKAYMLREATSVFAVWFCIVLLYGVLCFASNPMPGLGILSFIEFLRNPIVVFLNIITLIATLYHTVTYFLMTPKVMNIIVKNERLPHTVVRNALWAVTALVSVIALVLVYI.

The next 3 helical transmembrane spans lie at 30 to 50 (ATSV…LCFA), 70 to 90 (IVVF…VTYF), and 110 to 130 (VVRN…LVLV).

It belongs to the FrdC family. Part of an enzyme complex containing four subunits: a flavoprotein (FrdA), an iron-sulfur protein (FrdB), and two hydrophobic anchor proteins (FrdC and FrdD).

The protein localises to the cell inner membrane. Its function is as follows. Anchors the catalytic components of the fumarate reductase complex to the cell membrane, binds quinones. The protein is Fumarate reductase subunit C of Haemophilus influenzae (strain ATCC 51907 / DSM 11121 / KW20 / Rd).